The primary structure comprises 89 residues: Small ribosomal subunit protein uS15 (89 aa).

Positions 1-21 (MSITPERKQEMIKDYATKEGD) are enriched in basic and acidic residues. The tract at residues 1–23 (MSITPERKQEMIKDYATKEGDTG) is disordered.

The protein belongs to the universal ribosomal protein uS15 family. Part of the 30S ribosomal subunit. Forms a bridge to the 50S subunit in the 70S ribosome, contacting the 23S rRNA.

One of the primary rRNA binding proteins, it binds directly to 16S rRNA where it helps nucleate assembly of the platform of the 30S subunit by binding and bridging several RNA helices of the 16S rRNA. Functionally, forms an intersubunit bridge (bridge B4) with the 23S rRNA of the 50S subunit in the ribosome. This chain is Small ribosomal subunit protein uS15, found in Rhodospirillum rubrum (strain ATCC 11170 / ATH 1.1.1 / DSM 467 / LMG 4362 / NCIMB 8255 / S1).